A 380-amino-acid polypeptide reads, in one-letter code: Histidinol-phosphate aminotransferase 1 (380 aa).

N6-(pyridoxal phosphate)lysine is present on K235.

Belongs to the class-II pyridoxal-phosphate-dependent aminotransferase family. Histidinol-phosphate aminotransferase subfamily. Homodimer. Pyridoxal 5'-phosphate serves as cofactor.

The enzyme catalyses L-histidinol phosphate + 2-oxoglutarate = 3-(imidazol-4-yl)-2-oxopropyl phosphate + L-glutamate. The protein operates within amino-acid biosynthesis; L-histidine biosynthesis; L-histidine from 5-phospho-alpha-D-ribose 1-diphosphate: step 7/9. The chain is Histidinol-phosphate aminotransferase 1 from Psychrobacter arcticus (strain DSM 17307 / VKM B-2377 / 273-4).